The following is a 339-amino-acid chain: Protein-glutamate methylesterase/protein-glutamine glutaminase 3 (339 aa).

In terms of domain architecture, Response regulatory spans 2–119; sequence NIGIVNDLPL…GLSTDASPQA (118 aa). Aspartate 53 bears the 4-aspartylphosphate mark. Residues 141–336 form the CheB-type methylesterase domain; sequence PGPAPTRGQP…PQLIARIALT (196 aa). Active-site residues include serine 158, histidine 185, and aspartate 278.

It belongs to the CheB family. Phosphorylated by CheA. Phosphorylation of the N-terminal regulatory domain activates the methylesterase activity.

Its subcellular location is the cytoplasm. It catalyses the reaction [protein]-L-glutamate 5-O-methyl ester + H2O = L-glutamyl-[protein] + methanol + H(+). The enzyme catalyses L-glutaminyl-[protein] + H2O = L-glutamyl-[protein] + NH4(+). In terms of biological role, involved in chemotaxis. Part of a chemotaxis signal transduction system that modulates chemotaxis in response to various stimuli. Catalyzes the demethylation of specific methylglutamate residues introduced into the chemoreceptors (methyl-accepting chemotaxis proteins or MCP) by CheR. Also mediates the irreversible deamidation of specific glutamine residues to glutamic acid. This Burkholderia orbicola (strain AU 1054) protein is Protein-glutamate methylesterase/protein-glutamine glutaminase 3.